We begin with the raw amino-acid sequence, 66 residues long: MPKQKTHRGAAKRFKKTGSGKLKRSHAYTSHLFANKSTKAKRKLRKAGVVSAGDFKRIRQMLDNLK.

Residues 1-26 form a disordered region; that stretch reads MPKQKTHRGAAKRFKKTGSGKLKRSH.

It belongs to the bacterial ribosomal protein bL35 family.

This chain is Large ribosomal subunit protein bL35, found in Bacillus anthracis.